A 555-amino-acid polypeptide reads, in one-letter code: Synaptotagmin-14 (555 aa).

Over 1-24 (MAIEGGERTCGVHELICIRKVSPE) the chain is Extracellular. A helical; Signal-anchor for type III membrane protein transmembrane segment spans residues 25 to 47 (AVGFLSAVGVFIILMLLLFLYIN). The Cytoplasmic segment spans residues 48 to 555 (KKFCFENVGG…VCRWHALLES (508 aa)). Disordered stretches follow at residues 157–179 (TPPLDELQPPPYQDDSGSPHLSC) and 222–257 (GYEEDVPSDSTAVLSPEDMSAQGSSSQLPKPFDPEP). 2 consecutive C2 domains span residues 260–379 (KYGT…SLPV) and 415–550 (SVPE…CRWH).

The protein belongs to the synaptotagmin family. As to quaternary structure, homodimer. Can also form heterodimers. As to expression, highly expressed in fetal and adult brain tissue.

The protein resides in the membrane. In terms of biological role, may be involved in the trafficking and exocytosis of secretory vesicles in non-neuronal tissues. Is Ca(2+)-independent. The chain is Synaptotagmin-14 (SYT14) from Homo sapiens (Human).